The sequence spans 463 residues: Increased DNA methylation 3 (463 aa).

The segment covering asparagine 169 to arginine 182 has biased composition (basic and acidic residues). Disordered regions lie at residues asparagine 169–serine 199 and arginine 300–threonine 347. Residues glycine 184–serine 199 show a composition bias toward polar residues. The span at arginine 300–threonine 310 shows a compositional bias: basic residues.

In terms of assembly, interacts with MBD7 (via C-terminus), IDM1 and IDM2. Part of a complex made of MBD7, IDM1, IDM2 and IDM3.

The protein localises to the nucleus. Functionally, acts as an anti-silencing factor that prevents DNA hypermethylation and gene repression. This is Increased DNA methylation 3 from Arabidopsis thaliana (Mouse-ear cress).